The primary structure comprises 1106 residues: Protein shuttle craft (1106 aa).

Disordered stretches follow at residues 7 to 26 (QLTN…AMAD) and 189 to 371 (PAAA…KLSQ). The span at 189-201 (PAAATTNGNSTAS) shows a compositional bias: low complexity. 2 stretches are compositionally biased toward basic and acidic residues: residues 232–270 (NYER…RDSR) and 278–323 (RRSD…RDRI). A Phosphothreonine modification is found at Thr-335. Phosphoserine occurs at positions 336, 339, 343, and 354. Positions 336-354 (SNESAHPSPEKQSQLQQIS) are enriched in polar residues. The RING-type; atypical zinc-finger motif lies at 386–433 (CLVCVEAIKSHQPTWSCRNCYHMLHLKCTITWASSSKSEVGWRCPACQ). 8 consecutive NF-X1-type zinc fingers follow at residues 474–492 (CSHA…PCQA), 527–546 (CGEH…ACSE), 585–604 (CGHH…PCKL), 644–667 (CGKP…PCPK), 706–725 (CGKH…DCPL), 733–752 (CGKH…PCYR), 844–867 (CGGH…ICRQ), and 876–896 (CGHK…PCKE). The R3H domain maps to 1006–1071 (TKSVYETLTD…NRNVVATAHK (66 aa)).

The protein belongs to the NFX1 family. In terms of tissue distribution, ovaries and embryonic central nervous system.

It localises to the nucleus. Functionally, plays an essential role during the late stages of embryonic neurogenesis. May either fine-tune the guidance or the spatial maintenance of the migrating SNB and in nerve roots, which are composed of axons originating from distinct groups of motor neurons and may be required to either guide or maintain the position of these nerves along a direct and straight path to their ultimate targets in particular muscle fields. May play a role in egg chamber development and/or may confer essential maternal contributions to the early embryo. In Drosophila melanogaster (Fruit fly), this protein is Protein shuttle craft (stc).